The chain runs to 301 residues: uncharacterized protein (301 aa).

Glu-146, Glu-148, and Asp-177 together coordinate a divalent metal cation.

Belongs to the FAH family.

This is an uncharacterized protein from Staphylococcus saprophyticus subsp. saprophyticus (strain ATCC 15305 / DSM 20229 / NCIMB 8711 / NCTC 7292 / S-41).